We begin with the raw amino-acid sequence, 170 residues long: Putative pre-16S rRNA nuclease (170 aa).

This sequence belongs to the YqgF nuclease family.

Its subcellular location is the cytoplasm. Functionally, could be a nuclease involved in processing of the 5'-end of pre-16S rRNA. The polypeptide is Putative pre-16S rRNA nuclease (Synechococcus sp. (strain JA-2-3B'a(2-13)) (Cyanobacteria bacterium Yellowstone B-Prime)).